Consider the following 55-residue polypeptide: Large ribosomal subunit protein bL33 (55 aa).

It belongs to the bacterial ribosomal protein bL33 family.

The protein is Large ribosomal subunit protein bL33 of Arthrobacter sp. (strain FB24).